We begin with the raw amino-acid sequence, 300 residues long: NAD kinase (300 aa).

Catalysis depends on D80, which acts as the Proton acceptor. Residues 80 to 81, 154 to 155, R165, R182, D184, 195 to 200, and Q253 each bind NAD(+); these read DG, ND, and TAYALS.

This sequence belongs to the NAD kinase family. It depends on a divalent metal cation as a cofactor.

The protein resides in the cytoplasm. It carries out the reaction NAD(+) + ATP = ADP + NADP(+) + H(+). Functionally, involved in the regulation of the intracellular balance of NAD and NADP, and is a key enzyme in the biosynthesis of NADP. Catalyzes specifically the phosphorylation on 2'-hydroxyl of the adenosine moiety of NAD to yield NADP. This Aromatoleum aromaticum (strain DSM 19018 / LMG 30748 / EbN1) (Azoarcus sp. (strain EbN1)) protein is NAD kinase.